We begin with the raw amino-acid sequence, 203 residues long: Cell division protein SepF (203 aa).

2 disordered regions span residues 26-51 (DGELEQVQPAYQEEPPRRSAPERRGQ) and 167-203 (GTASGSQEGDLLARTARRSEEGDRTGADRSKFDWRNQ). 2 stretches are compositionally biased toward basic and acidic residues: residues 39-50 (EPPRRSAPERRG) and 183-203 (RRSEEGDRTGADRSKFDWRNQ).

Belongs to the SepF family. In terms of assembly, homodimer. Interacts with FtsZ.

The protein resides in the cytoplasm. Its function is as follows. Cell division protein that is part of the divisome complex and is recruited early to the Z-ring. Probably stimulates Z-ring formation, perhaps through the cross-linking of FtsZ protofilaments. Its function overlaps with FtsA. This chain is Cell division protein SepF, found in Symbiobacterium thermophilum (strain DSM 24528 / JCM 14929 / IAM 14863 / T).